We begin with the raw amino-acid sequence, 238 residues long: Probable transcriptional regulatory protein Mmwyl1_2868 (238 aa).

Belongs to the TACO1 family.

The protein resides in the cytoplasm. The polypeptide is Probable transcriptional regulatory protein Mmwyl1_2868 (Marinomonas sp. (strain MWYL1)).